The following is an 87-amino-acid chain: Kappa-3-bungarotoxin (87 aa).

The signal sequence occupies residues 1–21; the sequence is MKTLLLSLVVVTIVCLDLGYT. Intrachain disulfides connect cysteine 24/cysteine 42, cysteine 35/cysteine 63, cysteine 48/cysteine 52, cysteine 67/cysteine 79, and cysteine 80/cysteine 85.

This sequence belongs to the three-finger toxin family. Long-chain subfamily. Kappa-neurotoxin sub-subfamily. Homodimer and heterodimer with kappa 2-bungarotoxin; non-covalently-linked. As to expression, expressed by the venom gland.

Its subcellular location is the secreted. In terms of biological role, postsynaptic neurotoxin that binds and inhibits neuronal nicotinic acetylcholine receptors (nAChR) with high affinity (IC(50)&lt;100 nM). Is a selective, and slowly reversible antagonist of alpha-3/CHRNA3-containing and some alpha-4/CHRNA4-containing AChRs. The protein is Kappa-3-bungarotoxin of Bungarus multicinctus (Many-banded krait).